A 318-amino-acid polypeptide reads, in one-letter code: MAAAAAAAAEQQSSNGPVKKSMREKAVERRSVNKEHNSNFKAGYIPIDEDRLHKTGLRGRKGNLAICVIILLFILAVINLIITLVIWAVIRIGPNGCDSMEFHESGLLRFKQVSDMGVIHPLYKSTVGGRRNENLVITGNNQPIVFQQGTTKLSVENNKTSITSDIGMQFFDPRTQNILFSTDYETHEFHLPSGVKSLNVQKASTERITSNATSDLNIKVDGRAIVRGNEGVFIMGKTIEFHMGGNMELKAENSIILNGSVMVSTTRLPSSSSGDQLGSGDWVRYKLCMCADGTLFKVQVTSQNMGCQISDNPCGNTH.

The disordered stretch occupies residues 1 to 32; that stretch reads MAAAAAAAAEQQSSNGPVKKSMREKAVERRSV. Over 1 to 65 the chain is Cytoplasmic; sequence MAAAAAAAAE…GLRGRKGNLA (65 aa). Positions 21 to 32 are enriched in basic and acidic residues; sequence SMREKAVERRSV. The helical; Signal-anchor for type II membrane protein transmembrane segment at 66-86 threads the bilayer; sequence ICVIILLFILAVINLIITLVI. Residues 87-318 are Extracellular-facing; the sequence is WAVIRIGPNG…ISDNPCGNTH (232 aa). N-linked (GlcNAc...) asparagine glycans are attached at residues Asn-158, Asn-211, and Asn-258. 2 cysteine pairs are disulfide-bonded: Cys-288/Cys-314 and Cys-290/Cys-307.

Belongs to the sarcoglycan beta/delta/gamma/zeta family. Cross-link to form 2 major subcomplexes: one consisting of SGCB, SGCD and SGCG and the other consisting of SGCB and SGCD. The association between SGCB and SGCG is particularly strong while SGCA is loosely associated with the other sarcoglycans. Disulfide bonds are present. In terms of tissue distribution, highest expression in heart and skeletal muscle. Low expression in brain, kidney, placenta, pancreas and lung. High expression in fetal brain. Also found in fetal lung, kidney and liver.

The protein resides in the cell membrane. Its subcellular location is the sarcolemma. The protein localises to the cytoplasm. It is found in the cytoskeleton. Functionally, component of the sarcoglycan complex, a subcomplex of the dystrophin-glycoprotein complex which forms a link between the F-actin cytoskeleton and the extracellular matrix. This is Beta-sarcoglycan (SGCB) from Homo sapiens (Human).